Here is a 177-residue protein sequence, read N- to C-terminus: MPSSSAVLCCLVFLAGVAASRDASTLSDSSCTHFPASLPHMLRDVRAAFGKVKTFFQMKDQLNSMLLTQSLLDDFKGYLGCQALSEMIQFYLEEVMPQAENHGPDIKEHVNSLGEKLKTLRLRLRRCHRFLPCENKSKAVEQVKRVFNMLQERGVYKAMSEFDIFINYIESYMTTKM.

The N-terminal stretch at 1 to 19 (MPSSSAVLCCLVFLAGVAA) is a signal peptide. 2 disulfide bridges follow: Cys31/Cys127 and Cys81/Cys133. Asn135 carries N-linked (GlcNAc...) asparagine glycosylation.

The protein belongs to the IL-10 family. As to quaternary structure, homodimer. Interacts with IL10RA and IL10RB.

It is found in the secreted. Major immune regulatory cytokine that acts on many cells of the immune system where it has profound anti-inflammatory functions, limiting excessive tissue disruption caused by inflammation. Mechanistically, IL10 binds to its heterotetrameric receptor comprising IL10RA and IL10RB leading to JAK1 and STAT2-mediated phosphorylation of STAT3. In turn, STAT3 translocates to the nucleus where it drives expression of anti-inflammatory mediators. Targets antigen-presenting cells (APCs) such as macrophages and monocytes and inhibits their release of pro-inflammatory cytokines including granulocyte-macrophage colony-stimulating factor /GM-CSF, granulocyte colony-stimulating factor/G-CSF, IL-1 alpha, IL-1 beta, IL-6, IL-8 and TNF-alpha. Also interferes with antigen presentation by reducing the expression of MHC-class II and co-stimulatory molecules, thereby inhibiting their ability to induce T cell activation. In addition, controls the inflammatory response of macrophages by reprogramming essential metabolic pathways including mTOR signaling. This Ovis aries (Sheep) protein is Interleukin-10 (IL10).